We begin with the raw amino-acid sequence, 249 residues long: Cobalt transport protein CbiM (249 aa).

The N-terminal stretch at 1 to 27 (MKPLHRWLPVVIGAALLIIFESRAAYA) is a signal peptide. A run of 6 helical transmembrane segments spans residues 33–53 (GFLP…FWVL), 70–90 (LLLG…IPSV), 102–122 (LGTI…VLLF), 134–154 (TLGA…WLIW), 161–181 (APIW…TYVV), and 207–227 (IFAV…VLIF).

Belongs to the CbiM family. In terms of assembly, forms an energy-coupling factor (ECF) transporter complex composed of an ATP-binding protein (A component, CbiO), a transmembrane protein (T component, CbiQ) and 2 possible substrate-capture proteins (S components, CbiM and CbiN) of unknown stoichimetry.

The protein localises to the cell membrane. The protein operates within cofactor biosynthesis; adenosylcobalamin biosynthesis. Functionally, part of the energy-coupling factor (ECF) transporter complex CbiMNOQ involved in cobalt import. The sequence is that of Cobalt transport protein CbiM from Roseiflexus sp. (strain RS-1).